A 289-amino-acid polypeptide reads, in one-letter code: Diaminopimelate epimerase (289 aa).

The substrate site is built by Asn-13, Gln-47, and Asn-67. Catalysis depends on Cys-76, which acts as the Proton donor. Substrate-binding positions include 77 to 78 (GN), Asn-167, Asn-200, and 218 to 219 (ER). Cys-227 acts as the Proton acceptor in catalysis. Substrate is bound at residue 228-229 (GT).

The protein belongs to the diaminopimelate epimerase family. Homodimer.

It localises to the cytoplasm. The catalysed reaction is (2S,6S)-2,6-diaminopimelate = meso-2,6-diaminopimelate. Its pathway is amino-acid biosynthesis; L-lysine biosynthesis via DAP pathway; DL-2,6-diaminopimelate from LL-2,6-diaminopimelate: step 1/1. Functionally, catalyzes the stereoinversion of LL-2,6-diaminopimelate (L,L-DAP) to meso-diaminopimelate (meso-DAP), a precursor of L-lysine and an essential component of the bacterial peptidoglycan. The chain is Diaminopimelate epimerase from Burkholderia pseudomallei (strain K96243).